The chain runs to 301 residues: tRNA dimethylallyltransferase (301 aa).

5 to 12 lines the ATP pocket; sequence GPTASGKS. Position 7-12 (7-12) interacts with substrate; that stretch reads TASGKS. The segment at 30–33 is interaction with substrate tRNA; it reads DSMQ.

The protein belongs to the IPP transferase family. As to quaternary structure, monomer. The cofactor is Mg(2+).

The enzyme catalyses adenosine(37) in tRNA + dimethylallyl diphosphate = N(6)-dimethylallyladenosine(37) in tRNA + diphosphate. Catalyzes the transfer of a dimethylallyl group onto the adenine at position 37 in tRNAs that read codons beginning with uridine, leading to the formation of N6-(dimethylallyl)adenosine (i(6)A). In Rhodopseudomonas palustris (strain TIE-1), this protein is tRNA dimethylallyltransferase.